The primary structure comprises 922 residues: Alpha-actinin, sarcomeric (922 aa).

Residues 1–252 (MMENGGYVGQ…IMTYVSCYYH (252 aa)) form an actin-binding region. Calponin-homology (CH) domains follow at residues 36 to 140 (KQQK…LRFA) and 149 to 255 (MTAK…HAFQ). Spectrin repeat units lie at residues 253-393 (AFQG…MVSD), 394-508 (ITNS…RCQR), 509-629 (ICDQ…SADL), and 630-742 (ISRK…TMET). 2 EF-hand domains span residues 776 to 811 (EQLTEFRSSFNHFDKNRTGRLAPEEFKSCLVSLGYS) and 817 to 852 (QGDMDFQRILAVVDPNASGYVQFDAFLDFMTRESTD). Asp789, Asn791, Thr793, Arg795, and Glu800 together coordinate Ca(2+).

It belongs to the alpha-actinin family. Homodimer; antiparallel.

In terms of biological role, F-actin cross-linking protein which is thought to anchor actin to a variety of intracellular structures. This is a bundling protein. This Anopheles gambiae (African malaria mosquito) protein is Alpha-actinin, sarcomeric (Actn).